Reading from the N-terminus, the 415-residue chain is 8-amino-7-oxononanoate synthase (415 aa).

Residue Arg21 coordinates substrate. Gly117–Tyr118 is a pyridoxal 5'-phosphate binding site. His149 lines the substrate pocket. Positions 195, 223, and 251 each coordinate pyridoxal 5'-phosphate. The residue at position 254 (Lys254) is an N6-(pyridoxal phosphate)lysine. Substrate is bound at residue Thr374.

The protein belongs to the class-II pyridoxal-phosphate-dependent aminotransferase family. BioF subfamily. As to quaternary structure, homodimer. It depends on pyridoxal 5'-phosphate as a cofactor.

The catalysed reaction is 6-carboxyhexanoyl-[ACP] + L-alanine + H(+) = (8S)-8-amino-7-oxononanoate + holo-[ACP] + CO2. It functions in the pathway cofactor biosynthesis; biotin biosynthesis. Functionally, catalyzes the decarboxylative condensation of pimeloyl-[acyl-carrier protein] and L-alanine to produce 8-amino-7-oxononanoate (AON), [acyl-carrier protein], and carbon dioxide. This Ralstonia pickettii (strain 12J) protein is 8-amino-7-oxononanoate synthase.